The sequence spans 418 residues: Serine hydroxymethyltransferase (418 aa).

(6S)-5,6,7,8-tetrahydrofolate contacts are provided by residues Leu-121 and 125–127 (GHL). The residue at position 230 (Lys-230) is an N6-(pyridoxal phosphate)lysine. (6S)-5,6,7,8-tetrahydrofolate-binding positions include Glu-246 and 355-357 (SPF).

Belongs to the SHMT family. In terms of assembly, homodimer. Pyridoxal 5'-phosphate is required as a cofactor.

Its subcellular location is the cytoplasm. The catalysed reaction is (6R)-5,10-methylene-5,6,7,8-tetrahydrofolate + glycine + H2O = (6S)-5,6,7,8-tetrahydrofolate + L-serine. It functions in the pathway one-carbon metabolism; tetrahydrofolate interconversion. The protein operates within amino-acid biosynthesis; glycine biosynthesis; glycine from L-serine: step 1/1. Catalyzes the reversible interconversion of serine and glycine with tetrahydrofolate (THF) serving as the one-carbon carrier. This reaction serves as the major source of one-carbon groups required for the biosynthesis of purines, thymidylate, methionine, and other important biomolecules. Also exhibits THF-independent aldolase activity toward beta-hydroxyamino acids, producing glycine and aldehydes, via a retro-aldol mechanism. The protein is Serine hydroxymethyltransferase of Streptococcus pneumoniae serotype 4 (strain ATCC BAA-334 / TIGR4).